The primary structure comprises 203 residues: ATP-dependent Clp protease proteolytic subunit 1 (203 aa).

Ser103 functions as the Nucleophile in the catalytic mechanism. The active site involves His128.

It belongs to the peptidase S14 family. As to quaternary structure, fourteen ClpP subunits assemble into 2 heptameric rings which stack back to back to give a disk-like structure with a central cavity, resembling the structure of eukaryotic proteasomes.

The protein localises to the cytoplasm. The enzyme catalyses Hydrolysis of proteins to small peptides in the presence of ATP and magnesium. alpha-casein is the usual test substrate. In the absence of ATP, only oligopeptides shorter than five residues are hydrolyzed (such as succinyl-Leu-Tyr-|-NHMec, and Leu-Tyr-Leu-|-Tyr-Trp, in which cleavage of the -Tyr-|-Leu- and -Tyr-|-Trp bonds also occurs).. Functionally, cleaves peptides in various proteins in a process that requires ATP hydrolysis. Has a chymotrypsin-like activity. Plays a major role in the degradation of misfolded proteins. This is ATP-dependent Clp protease proteolytic subunit 1 from Treponema pallidum (strain Nichols).